The following is a 510-amino-acid chain: Portal protein (510 aa).

This sequence belongs to the podoviridae head-to-tail connector protein family. As to quaternary structure, homododecamer.

The protein localises to the virion. Its function is as follows. Forms the portal vertex of the capsid. This portal plays critical roles in head assembly, genome packaging, neck/tail attachment, and genome ejection. The portal protein multimerizes as a single ring-shaped homododecamer arranged around a central channel. This Pseudomonas phage phiKMV protein is Portal protein.